The chain runs to 158 residues: C-type lectin mannose-binding isoform (158 aa).

Positions 1 to 23 (MGRFLLVTLSLLVGAFSLNEANS) are cleaved as a signal peptide. Disulfide bonds link C26–C37, C54–C154, C61–C156, and C129–C146. One can recognise a C-type lectin domain in the interval 33-155 (KNGFCYKVFN…CKALYSFICQ (123 aa)). The short motif at 119 to 121 (EPN) is the Mannose-binding element. N-linked (GlcNAc...) asparagine glycosylation occurs at N121. Ca(2+) is bound by residues E127, N142, and D143.

This sequence belongs to the true venom lectin family. In terms of assembly, dimer. Probably disulfide-linked homodimer. Expressed by the venom gland.

It localises to the secreted. Its function is as follows. Mannose-binding lectin that binds to and agglutinates rabbit (but not human) erythrocytes in a calcium-dependent manner. This Oxyuranus scutellatus (Coastal taipan) protein is C-type lectin mannose-binding isoform.